Consider the following 610-residue polypeptide: UvrABC system protein C (610 aa).

The region spanning 16–94 (SQPGVYRMYD…IKLYQPRYNV (79 aa)) is the GIY-YIG domain. The UVR domain occupies 204–239 (QQVLTQLITRMEEASQQLHFEDAARIRDQIQAVRRV).

The protein belongs to the UvrC family. In terms of assembly, interacts with UvrB in an incision complex.

It is found in the cytoplasm. In terms of biological role, the UvrABC repair system catalyzes the recognition and processing of DNA lesions. UvrC both incises the 5' and 3' sides of the lesion. The N-terminal half is responsible for the 3' incision and the C-terminal half is responsible for the 5' incision. This Yersinia pseudotuberculosis serotype O:1b (strain IP 31758) protein is UvrABC system protein C.